The following is a 697-amino-acid chain: tRNA 5-methylaminomethyl-2-thiouridine biosynthesis bifunctional protein MnmC (697 aa).

A tRNA (mnm(5)s(2)U34)-methyltransferase region spans residues Met1–Ser272. An FAD-dependent cmnm(5)s(2)U34 oxidoreductase region spans residues Ile300–Ile697.

It in the N-terminal section; belongs to the methyltransferase superfamily. tRNA (mnm(5)s(2)U34)-methyltransferase family. In the C-terminal section; belongs to the DAO family. The cofactor is FAD.

The protein localises to the cytoplasm. It carries out the reaction 5-aminomethyl-2-thiouridine(34) in tRNA + S-adenosyl-L-methionine = 5-methylaminomethyl-2-thiouridine(34) in tRNA + S-adenosyl-L-homocysteine + H(+). In terms of biological role, catalyzes the last two steps in the biosynthesis of 5-methylaminomethyl-2-thiouridine (mnm(5)s(2)U) at the wobble position (U34) in tRNA. Catalyzes the FAD-dependent demodification of cmnm(5)s(2)U34 to nm(5)s(2)U34, followed by the transfer of a methyl group from S-adenosyl-L-methionine to nm(5)s(2)U34, to form mnm(5)s(2)U34. This chain is tRNA 5-methylaminomethyl-2-thiouridine biosynthesis bifunctional protein MnmC, found in Psychrobacter cryohalolentis (strain ATCC BAA-1226 / DSM 17306 / VKM B-2378 / K5).